The chain runs to 109 residues: Nucleoid-associated protein VC_1055 (109 aa).

The interval 1–22 (MFGKGGMGNLMKQAQQMQERMQ) is disordered.

This sequence belongs to the YbaB/EbfC family. In terms of assembly, homodimer.

It localises to the cytoplasm. It is found in the nucleoid. Functionally, binds to DNA and alters its conformation. May be involved in regulation of gene expression, nucleoid organization and DNA protection. The chain is Nucleoid-associated protein VC_1055 from Vibrio cholerae serotype O1 (strain ATCC 39315 / El Tor Inaba N16961).